The following is a 432-amino-acid chain: MGKSVVVLGAQWGDEGKGKIVDLLTDRVKYVVRYQGGHNAGHTLIINGEKTVLRLIPSGILRENVTCLIGNGVVLSPTALMQEMGELESRGINVRERLLISEACPLILPYHVAMDKARESALGNKAIGTTGRGIGPAYEDKVARRGLRVGDLFDKELFAEKLKNILDYYNFQLVHYYKAEAVDYQKTLDEVFAVADIITAMVADVSTILDIARKKGDNILFEGAQGTMLDIDQGTYPYVTSSNTTAGGVSTGAGFGPRHIDYVLGIIKAYCTRVGGGPFTTELFDDVGAEIARKGNEFGAVTGRPRRCGWFDAVAIKRAIQTNSISGFCMTKLDVLDGFHEIKICVGYKMPNGEIAEYAPLAAKDWEGVEPIYETLPGWQENTFGITDVNQLPENTRNYIKRIEEVTGVPIAILSTGPDRVETMILNDPFAV.

Residues 13–19 (GDEGKGK) and 41–43 (GHT) contribute to the GTP site. The Proton acceptor role is filled by Asp-14. Mg(2+) is bound by residues Asp-14 and Gly-41. Residues 14–17 (DEGK), 39–42 (NAGH), Thr-130, Arg-144, Gln-225, Thr-240, and Arg-304 contribute to the IMP site. His-42 acts as the Proton donor in catalysis. 300 to 306 (AVTGRPR) is a substrate binding site. Residues Arg-306, 332–334 (KLD), and 415–417 (STG) each bind GTP.

Belongs to the adenylosuccinate synthetase family. Homodimer. Mg(2+) serves as cofactor.

The protein localises to the cytoplasm. The enzyme catalyses IMP + L-aspartate + GTP = N(6)-(1,2-dicarboxyethyl)-AMP + GDP + phosphate + 2 H(+). Its pathway is purine metabolism; AMP biosynthesis via de novo pathway; AMP from IMP: step 1/2. In terms of biological role, plays an important role in the de novo pathway of purine nucleotide biosynthesis. Catalyzes the first committed step in the biosynthesis of AMP from IMP. The chain is Adenylosuccinate synthetase from Histophilus somni (strain 129Pt) (Haemophilus somnus).